The primary structure comprises 471 residues: Glutamate--tRNA ligase 1 (471 aa).

Residues 15 to 25 (PSPTGYLHIGG) carry the 'HIGH' region motif. A 'KMSKS' region motif is present at residues 243–247 (KLSKR). Residue Lys246 participates in ATP binding.

Belongs to the class-I aminoacyl-tRNA synthetase family. Glutamate--tRNA ligase type 1 subfamily. As to quaternary structure, monomer.

It localises to the cytoplasm. It catalyses the reaction tRNA(Glu) + L-glutamate + ATP = L-glutamyl-tRNA(Glu) + AMP + diphosphate. Catalyzes the attachment of glutamate to tRNA(Glu) in a two-step reaction: glutamate is first activated by ATP to form Glu-AMP and then transferred to the acceptor end of tRNA(Glu). The polypeptide is Glutamate--tRNA ligase 1 (Dinoroseobacter shibae (strain DSM 16493 / NCIMB 14021 / DFL 12)).